We begin with the raw amino-acid sequence, 199 residues long: Large ribosomal subunit protein bL25 (199 aa).

This sequence belongs to the bacterial ribosomal protein bL25 family. CTC subfamily. In terms of assembly, part of the 50S ribosomal subunit; part of the 5S rRNA/L5/L18/L25 subcomplex. Contacts the 5S rRNA. Binds to the 5S rRNA independently of L5 and L18.

This is one of the proteins that binds to the 5S RNA in the ribosome where it forms part of the central protuberance. This Pelodictyon phaeoclathratiforme (strain DSM 5477 / BU-1) protein is Large ribosomal subunit protein bL25.